We begin with the raw amino-acid sequence, 422 residues long: Serine--tRNA ligase (422 aa).

226–228 (TSE) is an L-serine binding site. ATP contacts are provided by residues 257–259 (RRE) and Val273. Glu280 is an L-serine binding site. 344 to 347 (ELTS) is an ATP binding site. Thr379 contacts L-serine.

This sequence belongs to the class-II aminoacyl-tRNA synthetase family. Type-1 seryl-tRNA synthetase subfamily. As to quaternary structure, homodimer. The tRNA molecule binds across the dimer.

Its subcellular location is the cytoplasm. It catalyses the reaction tRNA(Ser) + L-serine + ATP = L-seryl-tRNA(Ser) + AMP + diphosphate + H(+). It carries out the reaction tRNA(Sec) + L-serine + ATP = L-seryl-tRNA(Sec) + AMP + diphosphate + H(+). The protein operates within aminoacyl-tRNA biosynthesis; selenocysteinyl-tRNA(Sec) biosynthesis; L-seryl-tRNA(Sec) from L-serine and tRNA(Sec): step 1/1. Its function is as follows. Catalyzes the attachment of serine to tRNA(Ser). Is also able to aminoacylate tRNA(Sec) with serine, to form the misacylated tRNA L-seryl-tRNA(Sec), which will be further converted into selenocysteinyl-tRNA(Sec). This chain is Serine--tRNA ligase, found in Corynebacterium glutamicum (strain ATCC 13032 / DSM 20300 / JCM 1318 / BCRC 11384 / CCUG 27702 / LMG 3730 / NBRC 12168 / NCIMB 10025 / NRRL B-2784 / 534).